The following is a 297-amino-acid chain: UDP-N-acetylenolpyruvoylglucosamine reductase (297 aa).

The FAD-binding PCMH-type domain occupies K24 to G189. Residue R169 is part of the active site. The active-site Proton donor is the S218. Residue E289 is part of the active site.

Belongs to the MurB family. FAD serves as cofactor.

The protein resides in the cytoplasm. It carries out the reaction UDP-N-acetyl-alpha-D-muramate + NADP(+) = UDP-N-acetyl-3-O-(1-carboxyvinyl)-alpha-D-glucosamine + NADPH + H(+). Its pathway is cell wall biogenesis; peptidoglycan biosynthesis. Its function is as follows. Cell wall formation. The sequence is that of UDP-N-acetylenolpyruvoylglucosamine reductase from Rickettsia canadensis (strain McKiel).